The primary structure comprises 586 residues: Protein BONZAI 2 (586 aa).

The N-myristoyl glycine moiety is linked to residue glycine 2. 2 consecutive C2 domains span residues 25-164 and 176-303; these read SAAT…ALEL and PQHN…NLAL. Residues aspartate 62, aspartate 68, aspartate 121, and aspartate 123 each contribute to the Ca(2+) site. Positions 344–563 constitute a VWFA domain; that stretch reads NFMVAIDFTA…SVVEALLAEL (220 aa).

The protein belongs to the copine family. In terms of assembly, interacts with BAP1 and BAP2. Ca(2+) is required as a cofactor. In terms of tissue distribution, expressed in roots, leaves and stems. Expressed in young growing tissues.

Its subcellular location is the cell membrane. Functionally, negative regulator of cell death and defense responses. May repress a number of R genes and may have effects in promoting growth and development. May function in membrane trafficking and in fusion of vesicles with plasma membrane. The chain is Protein BONZAI 2 (BON2) from Arabidopsis thaliana (Mouse-ear cress).